A 397-amino-acid polypeptide reads, in one-letter code: Elongation factor Tu (397 aa).

In terms of domain architecture, tr-type G spans 10-206 (KPHCNIGTIG…AVDTWIPDPQ (197 aa)). The interval 19–26 (GHVDHGKT) is G1. 19–26 (GHVDHGKT) contributes to the GTP binding site. Thr26 is a binding site for Mg(2+). Residues 61–65 (GITIS) are G2. A G3 region spans residues 82–85 (DCPG). GTP is bound by residues 82-86 (DCPGH) and 137-140 (NKCD). The segment at 137 to 140 (NKCD) is G4. Positions 175–177 (SAL) are G5.

It belongs to the TRAFAC class translation factor GTPase superfamily. Classic translation factor GTPase family. EF-Tu/EF-1A subfamily. In terms of assembly, monomer.

It is found in the cytoplasm. It catalyses the reaction GTP + H2O = GDP + phosphate + H(+). Functionally, GTP hydrolase that promotes the GTP-dependent binding of aminoacyl-tRNA to the A-site of ribosomes during protein biosynthesis. The sequence is that of Elongation factor Tu from Lachnoclostridium phytofermentans (strain ATCC 700394 / DSM 18823 / ISDg) (Clostridium phytofermentans).